The chain runs to 297 residues: Phosphoribosylaminoimidazole-succinocarboxamide synthase (297 aa).

It belongs to the SAICAR synthetase family.

It carries out the reaction 5-amino-1-(5-phospho-D-ribosyl)imidazole-4-carboxylate + L-aspartate + ATP = (2S)-2-[5-amino-1-(5-phospho-beta-D-ribosyl)imidazole-4-carboxamido]succinate + ADP + phosphate + 2 H(+). Its pathway is purine metabolism; IMP biosynthesis via de novo pathway; 5-amino-1-(5-phospho-D-ribosyl)imidazole-4-carboxamide from 5-amino-1-(5-phospho-D-ribosyl)imidazole-4-carboxylate: step 1/2. This Saccharopolyspora erythraea (strain ATCC 11635 / DSM 40517 / JCM 4748 / NBRC 13426 / NCIMB 8594 / NRRL 2338) protein is Phosphoribosylaminoimidazole-succinocarboxamide synthase.